The sequence spans 270 residues: Tetraspanin-17 (270 aa).

The Cytoplasmic portion of the chain corresponds to 1-19 (MPGKHQQFQDPEVGCCGKY). Residues 20-40 (FLFGFNIVFWVLGALFLAIGL) traverse the membrane as a helical segment. The Extracellular segment spans residues 41–63 (WAWGEKGVLSNISGLTDLGGLDP). Asparagine 51 carries an N-linked (GlcNAc...) asparagine glycan. The chain crosses the membrane as a helical span at residues 64–84 (VWLFVVIGGIMSVLGFAGCIG). The Cytoplasmic segment spans residues 85–94 (ALRENTFLLK). Residues 95–115 (FFSVFLGLIFFLELAAGILAF) form a helical membrane-spanning segment. The Extracellular portion of the chain corresponds to 116 to 234 (VFKDWIRDQL…GQFEKWLQDN (119 aa)). Cystine bridges form between cysteine 155-cysteine 223, cysteine 156-cysteine 188, cysteine 172-cysteine 182, and cysteine 189-cysteine 202. N-linked (GlcNAc...) asparagine glycosylation occurs at asparagine 171. The chain crosses the membrane as a helical span at residues 235-255 (LIVVAGVLVAIALLQICGICL). The Cytoplasmic segment spans residues 256-270 (AQNLVSDIEAVKANW).

The protein belongs to the tetraspanin (TM4SF) family. Interacts with ADAM10; the interaction influences ADAM10 substrate specificity, endocytosis and turnover.

It is found in the cell membrane. Functionally, part of TspanC8 subgroup, composed of 6 members that interact with the transmembrane metalloprotease ADAM10. This interaction is required for ADAM10 exit from the endoplasmic reticulum and for enzymatic maturation and trafficking to the cell surface as well as substrate specificity. Different TspanC8/ADAM10 complexes have distinct substrates. Seems to regulate VE-cadherin expression in endothelial cells probably through interaction with ADAM10, promoting leukocyte transmigration. The chain is Tetraspanin-17 (Tspan17) from Rattus norvegicus (Rat).